Consider the following 490-residue polypeptide: Cytochrome P450 2C12, female-specific (490 aa).

Heme is bound at residue Cys435.

Belongs to the cytochrome P450 family. Heme is required as a cofactor.

The protein resides in the endoplasmic reticulum membrane. It localises to the microsome membrane. The catalysed reaction is an organic molecule + reduced [NADPH--hemoprotein reductase] + O2 = an alcohol + oxidized [NADPH--hemoprotein reductase] + H2O + H(+). Functionally, this P450 is active in 15-beta-hydroxylation of steroid sulfates. In Rattus norvegicus (Rat), this protein is Cytochrome P450 2C12, female-specific (Cyp2c12).